The primary structure comprises 212 residues: Golgi SNAP receptor complex member 2 (212 aa).

M1 is modified (N-acetylmethionine). Residues 1 to 190 (MEPLYQQTNK…LIEKRAFQDK (190 aa)) lie on the Cytoplasmic side of the membrane. Residues 60 to 92 (LNRRQNAKLRVDQLKYDVQHLQTALRNFQHRRQ) are a coiled coil. The short motif at 118 to 120 (IPM) is the IxM motif; signal for cargo packaging into COPII-coated vesicles element. Residues 191 to 211 (YFMIGGMLLTCAVMFLVVQYL) form a helical; Anchor for type IV membrane protein membrane-spanning segment. A topological domain (vesicular) is located at residue T212.

It belongs to the GOSR2 family. In terms of assembly, part of a unique SNARE complex composed of the Golgi SNAREs GOSR1, STX5 and YKT6. Interacts with BET1.

It localises to the golgi apparatus. The protein resides in the cis-Golgi network membrane. It is found in the golgi apparatus membrane. The protein localises to the endoplasmic reticulum membrane. Functionally, involved in transport of proteins from the cis/medial-Golgi to the trans-Golgi network. The chain is Golgi SNAP receptor complex member 2 (Gosr2) from Mus musculus (Mouse).